A 351-amino-acid chain; its full sequence is Transcriptional activator POG1 (351 aa).

Basic and acidic residues predominate over residues 1 to 26; it reads MKQEPHRQSEEKEKPKGPMAVEREQH. The tract at residues 1–56 is disordered; sequence MKQEPHRQSEEKEKPKGPMAVEREQHTSLSSGTTVTASTGDESTNSRPVESSQTEK. Positions 27-56 are enriched in polar residues; it reads TSLSSGTTVTASTGDESTNSRPVESSQTEK. Residues serine 152 and serine 168 each carry the phosphoserine modification. 2 disordered regions span residues 234–256 and 291–351; these read PGMG…TPVM and QHQL…PPPT. Polar residues predominate over residues 241 to 256; that stretch reads QLPTMSSNSESQTPVM. Serine 314 is modified (phosphoserine).

This sequence belongs to the POG1 family. Post-translationally, phosphorylated by CDC28.

The protein localises to the nucleus. In terms of biological role, transcriptional activator which promotes cell cycle recovery with CLN2, after pheromone induced G1 arrest, probably inhibiting the ability of STE20 to activate the pheromone response pathway. Binds the promoters of genes that function in cell cycle regulation, cytoskeletal organization, and spindle assembly. May also be involved in stress-resistance. The protein is Transcriptional activator POG1 (POG1) of Saccharomyces cerevisiae (strain ATCC 204508 / S288c) (Baker's yeast).